The sequence spans 158 residues: Probable transcription regulator ArfM (158 aa).

In terms of biological role, activates, in anaerobic conditions, the transcription of the fermentative operons lctEP and alsDS, of the hmp gene encoding a flavohemoglobin-like protein, the nitrite reductase operon nasDE and the heme biosynthesis genes hemN and hemZ. The polypeptide is Probable transcription regulator ArfM (arfM) (Bacillus subtilis (strain 168)).